Here is a 1816-residue protein sequence, read N- to C-terminus: Kinesin-like protein KIF1B (1816 aa).

S2 is subject to N-acetylserine. The 350-residue stretch at 5 to 354 folds into the Kinesin motor domain; that stretch reads SVKVAVRVRP…LRYADRAKQI (350 aa). Residue 97-104 coordinates ATP; the sequence is GQTGAGKS. An interaction with KIFBP region spans residues 270–350; that stretch reads NINKSLTTLG…TLSTLRYADR (81 aa). A coiled-coil region spans residues 365–386; sequence NAKLVRELKEEVTRLKDLLRAQ. Residues 431–450 form a disordered region; that stretch reads FSTASMGSLTSSPSSCSLSS. Positions 432–450 are enriched in low complexity; it reads STASMGSLTSSPSSCSLSS. Residues 470–502 are a coiled coil; that stretch reads GEEAIERLKESEKIIAELNETWEEKLRKTEAIR. In terms of domain architecture, FHA spans 556-612; it reads TRVGQADAERRQDIVLSGAHIKEEHCIFRSERSNSGEVIVTLEPCERSETYVNGKRV. 2 positions are modified to phosphothreonine: T647 and T652. 2 positions are modified to phosphoserine: Q663 and E665. Coiled-coil stretches lie at residues 668-737 and 841-869; these read EKQG…EEEV and SLEK…AQDE. Phosphoserine is present on residues S1054 and S1057. Residue T1075 is modified to Phosphothreonine. A phosphoserine mark is found at N1141, S1416, S1454, and S1487. The interval 1550–1570 is disordered; that stretch reads STTTFESAITPSESSGYDSGD. A compositionally biased stretch (polar residues) spans 1554–1566; the sequence is FESAITPSESSGY. Phosphoserine is present on residues S1573, S1603, S1610, and S1613. Residues 1617-1660 form a disordered region; sequence RDPSESSFSSATLTPSSTCPSLVDSRSNSLDQKTPEANSRASSP. The segment covering 1621-1634 has biased composition (low complexity); the sequence is ESSFSSATLTPSST. Positions 1640 to 1658 are enriched in polar residues; sequence DSRSNSLDQKTPEANSRAS. The 98-residue stretch at 1702–1799 folds into the PH domain; that stretch reads VSKKGYLHFK…WLYAFNPLLA (98 aa).

The protein belongs to the TRAFAC class myosin-kinesin ATPase superfamily. Kinesin family. Unc-104 subfamily. As to quaternary structure, monomer. Interacts with KIFBP; positively regulates KIF1B microtubule motor activity. Interacts (via C-terminus end of the kinesin-motor domain) with CHP1; the interaction occurs in a calcium-dependent manner. Interacts with MADD (via death domain); links this isoform to Rab3-carrying vesicles in anterograde synaptic vesicle transport. As to expression, isoform 3 is abundant in the skeletal muscle. It is also expressed in fetal brain, lung and kidney, and adult heart, placenta, testis, ovary and small intestine. Isoform 2 is abundant in the brain and also expressed in fetal heart, lung, liver and kidney, and adult skeletal muscle, placenta, liver, kidney, heart, spleen, thymus, prostate, testis, ovary, small intestine, colon and pancreas.

The protein localises to the cytoplasm. Its subcellular location is the cytoskeleton. It localises to the cytoplasmic vesicle. It is found in the secretory vesicle. The protein resides in the synaptic vesicle membrane. The protein localises to the mitochondrion. It catalyses the reaction ATP + H2O + a kinesin associated with a microtubule at position (n) = ADP + phosphate a kinesin associated with a microtubule at position (n+1, toward the plus end).. Has a plus-end-directed microtubule motor activity and functions as a motor for transport of vesicles and organelles along microtubules. Functionally, has a plus-end-directed microtubule motor activity and functions as a motor for anterograde synaptic vesicle transport along axonal microtubules from the cell body to the presynapse in neuronal cells. Functions as a downstream effector in a developmental apoptotic pathway that is activated when nerve growth factor (NGF) becomes limiting for neuronal progenitor cells. In terms of biological role, has a plus-end-directed microtubule motor activity and functions as a motor for anterograde transport of mitochondria. The sequence is that of Kinesin-like protein KIF1B from Homo sapiens (Human).